A 305-amino-acid chain; its full sequence is UDP-N-acetylenolpyruvoylglucosamine reductase (305 aa).

Residues 34–199 form the FAD-binding PCMH-type domain; it reads RVGGPAQVLF…TSARFRGEVK (166 aa). The active site involves Arg-179. Ser-228 (proton donor) is an active-site residue. Residue Glu-298 is part of the active site.

The protein belongs to the MurB family. Requires FAD as cofactor.

It localises to the cytoplasm. The enzyme catalyses UDP-N-acetyl-alpha-D-muramate + NADP(+) = UDP-N-acetyl-3-O-(1-carboxyvinyl)-alpha-D-glucosamine + NADPH + H(+). The protein operates within cell wall biogenesis; peptidoglycan biosynthesis. Functionally, cell wall formation. In Bradyrhizobium diazoefficiens (strain JCM 10833 / BCRC 13528 / IAM 13628 / NBRC 14792 / USDA 110), this protein is UDP-N-acetylenolpyruvoylglucosamine reductase.